Consider the following 383-residue polypeptide: Na(+)/H(+) antiporter NhaA (383 aa).

11 consecutive transmembrane segments (helical) span residues 14-34 (AGGILLVIAAAIAMTIANSPL), 47-67 (FGMSVSHWINDGLMAVFFLLI), 87-107 (IFPAIAAVGGMLAPALIYVAF), 117-137 (GWAIPAATDIAFALGIMALLG), 146-166 (VFLLALAIIDDLGVVVIIALF), 171-191 (LSSMALLVGFVMTGVLFMLNA), 205-225 (AILWFAVLKSGVHATLAGVVI), 252-272 (VAFGILPLFAFANAGISLEGV), 280-300 (MLPLGIALGLLIGKPLGIFSF), 321-341 (IFAVSVLCGIGFTMSIFISSL), and 356-376 (LGILMGSTTAAVLGYALLHFS).

This sequence belongs to the NhaA Na(+)/H(+) (TC 2.A.33) antiporter family.

Its subcellular location is the cell inner membrane. It catalyses the reaction Na(+)(in) + 2 H(+)(out) = Na(+)(out) + 2 H(+)(in). The enzyme catalyses Li(+)(in) + 2 H(+)(out) = Li(+)(out) + 2 H(+)(in). With respect to regulation, activity is regulated by pH. Active at alkaline pH. Amiloride strongly reduces affinity for Na(+), but does not change the Vmax. In terms of biological role, na(+)/H(+) antiporter that extrudes sodium in exchange for external protons. Can also transport lithium and potassium. The sequence is that of Na(+)/H(+) antiporter NhaA from Vibrio parahaemolyticus serotype O3:K6 (strain RIMD 2210633).